We begin with the raw amino-acid sequence, 608 residues long: Serine/arginine repetitive matrix protein 4 (608 aa).

Disordered stretches follow at residues alanine 34–arginine 246 and serine 261–arginine 608. A compositionally biased stretch (basic and acidic residues) spans glycine 78–proline 100. Basic residues-rich tracts occupy residues arginine 107–serine 123 and valine 131–proline 187. Positions serine 188 to cysteine 200 are enriched in low complexity. Basic and acidic residues predominate over residues glutamate 201 to arginine 213. Residues lysine 214–cysteine 228 are compositionally biased toward basic residues. Positions threonine 289–serine 299 are enriched in low complexity. Over residues cysteine 322–asparagine 339 the composition is skewed to polar residues. Low complexity-rich tracts occupy residues arginine 389–threonine 420 and serine 428–serine 459. Residues proline 460 to glutamate 477 are compositionally biased toward basic and acidic residues. Residues arginine 478–arginine 494 show a composition bias toward basic residues. A compositionally biased stretch (basic and acidic residues) spans aspartate 495–arginine 504. Positions proline 518 to arginine 555 are enriched in low complexity. The segment covering serine 556–threonine 573 has biased composition (basic residues). The segment covering serine 574–arginine 608 has biased composition (low complexity).

The protein belongs to the nSR100 family. Post-translationally, phosphorylated. In terms of tissue distribution, specifically expressed in neuronal cells (at protein level). Expressed in adult nervous system and sensory organ tissues.

The protein localises to the nucleus. Its function is as follows. Splicing factor specifically required for neural cell differentiation. Acts in conjunction with nPTB/PTBP2 by binding directly to its regulated target transcripts and promotes neural-specific exon inclusion in many genes that function in neural cell differentiation. Required to promote the inclusion of neural-specific exon 10 in nPTB/PTBP2, leading to increased expression of neural-specific nPTB/PTBP2. Also promotes the inclusion of exon 16 in DAAM1 in neuron extracts. Promotes alternative splicing of REST transcripts to produce REST isoform 2 (REST4) with greatly reduced repressive activity, thereby activating expression of REST targets in neural cells. Plays an important role during embryonic development as well as in the proper functioning of the adult nervous system. Regulates alternative splicing events in genes with important neuronal functions. The sequence is that of Serine/arginine repetitive matrix protein 4 (Srrm4) from Mus musculus (Mouse).